The following is a 226-amino-acid chain: Octanoyltransferase (226 aa).

Positions 34–216 constitute a BPL/LPL catalytic domain; that stretch reads GEANELVWLL…AWTEAFGPVR (183 aa). Residues 73-80, 145-147, and 158-160 each bind substrate; these read RGGEYTYH, AIG, and GIA. Cys176 (acyl-thioester intermediate) is an active-site residue.

The protein belongs to the LipB family.

It localises to the cytoplasm. The catalysed reaction is octanoyl-[ACP] + L-lysyl-[protein] = N(6)-octanoyl-L-lysyl-[protein] + holo-[ACP] + H(+). The protein operates within protein modification; protein lipoylation via endogenous pathway; protein N(6)-(lipoyl)lysine from octanoyl-[acyl-carrier-protein]: step 1/2. Functionally, catalyzes the transfer of endogenously produced octanoic acid from octanoyl-acyl-carrier-protein onto the lipoyl domains of lipoate-dependent enzymes. Lipoyl-ACP can also act as a substrate although octanoyl-ACP is likely to be the physiological substrate. The polypeptide is Octanoyltransferase (Maricaulis maris (strain MCS10) (Caulobacter maris)).